A 120-amino-acid polypeptide reads, in one-letter code: Large ribosomal subunit protein uL18c (120 aa).

It belongs to the universal ribosomal protein uL18 family. Part of the 50S ribosomal subunit; contacts the 5S rRNA.

It is found in the plastid. Its subcellular location is the chloroplast. Binds 5S rRNA, forms part of the central protuberance of the 50S subunit. This is Large ribosomal subunit protein uL18c (rpl18) from Pyropia yezoensis (Susabi-nori).